The sequence spans 677 residues: Protein asunder (677 aa).

Residues 515 to 540 (RLKLSKAKDQYRLLYRELEQLIQLNS) adopt a coiled-coil conformation. A compositionally biased stretch (low complexity) spans 578–598 (ESPLSPERLEPTSSSSSNSLL). The interval 578 to 604 (ESPLSPERLEPTSSSSSNSLLKARKRR) is disordered. The short motif at 598 to 604 (LKARKRR) is the Nuclear localization signal (NLS) element.

Belongs to the Integrator subunit 13 family. As to quaternary structure, belongs to the multiprotein complex Integrator, at least composed of IntS1, IntS2, IntS3, IntS4, omd/IntS5, IntS6, defl/IntS7, IntS8, IntS9, IntS10, IntS11, IntS12, asun/IntS13, IntS14 and IntS15. The core complex associates with protein phosphatase 2A subunits mts/PP2A and Pp2A-29B, to form the Integrator-PP2A (INTAC) complex. In terms of processing, phosphorylated.

It localises to the nucleus. The protein resides in the cytoplasm. It is found in the perinuclear region. Its function is as follows. Component of the integrator complex, a multiprotein complex that terminates RNA polymerase II (Pol II) transcription in the promoter-proximal region of genes. The integrator complex provides a quality checkpoint during transcription elongation by driving premature transcription termination of transcripts that are unfavorably configured for transcriptional elongation: the complex terminates transcription by (1) catalyzing dephosphorylation of the C-terminal domain (CTD) of Pol II subunit Polr2A/Rbp1 and Spt5, and (2) degrading the exiting nascent RNA transcript via endonuclease activity. The integrator complex is also involved in the 3'-end processing of the U7 snRNA, and also the spliceosomal snRNAs U1, U2, U4 and U5. The polypeptide is Protein asunder (asun) (Drosophila willistoni (Fruit fly)).